The primary structure comprises 467 residues: Ribulose bisphosphate carboxylase large chain (467 aa).

Lysine 5 carries the post-translational modification N6,N6,N6-trimethyllysine. Asparagine 114 and threonine 164 together coordinate substrate. Lysine 166 functions as the Proton acceptor in the catalytic mechanism. Lysine 168 contacts substrate. Mg(2+)-binding residues include lysine 192, aspartate 194, and glutamate 195. Lysine 192 carries the post-translational modification N6-carboxylysine. The active-site Proton acceptor is the histidine 285. 3 residues coordinate substrate: arginine 286, histidine 318, and serine 370.

The protein belongs to the RuBisCO large chain family. Type I subfamily. In terms of assembly, heterohexadecamer of 8 large chains and 8 small chains; disulfide-linked. The disulfide link is formed within the large subunit homodimers. It depends on Mg(2+) as a cofactor. In terms of processing, the disulfide bond which can form in the large chain dimeric partners within the hexadecamer appears to be associated with oxidative stress and protein turnover.

It is found in the plastid. The protein localises to the chloroplast. The catalysed reaction is 2 (2R)-3-phosphoglycerate + 2 H(+) = D-ribulose 1,5-bisphosphate + CO2 + H2O. It catalyses the reaction D-ribulose 1,5-bisphosphate + O2 = 2-phosphoglycolate + (2R)-3-phosphoglycerate + 2 H(+). Functionally, ruBisCO catalyzes two reactions: the carboxylation of D-ribulose 1,5-bisphosphate, the primary event in carbon dioxide fixation, as well as the oxidative fragmentation of the pentose substrate in the photorespiration process. Both reactions occur simultaneously and in competition at the same active site. The chain is Ribulose bisphosphate carboxylase large chain from Hydrophyllum virginianum (Eastern waterleaf).